Reading from the N-terminus, the 283-residue chain is Phosphatidylglycerol--prolipoprotein diacylglyceryl transferase (283 aa).

A run of 7 helical transmembrane segments spans residues 21–41, 60–80, 95–115, 124–144, 176–196, 203–223, and 239–259; these read LAVR…LWLA, LLFA…VLFY, VWTG…AMLW, FFTI…AGRL, SQLY…NWFI, GAVS…VEYV, and MGQI…LWAF. R143 is a binding site for a 1,2-diacyl-sn-glycero-3-phospho-(1'-sn-glycerol).

It belongs to the Lgt family.

It is found in the cell inner membrane. It carries out the reaction L-cysteinyl-[prolipoprotein] + a 1,2-diacyl-sn-glycero-3-phospho-(1'-sn-glycerol) = an S-1,2-diacyl-sn-glyceryl-L-cysteinyl-[prolipoprotein] + sn-glycerol 1-phosphate + H(+). It functions in the pathway protein modification; lipoprotein biosynthesis (diacylglyceryl transfer). In terms of biological role, catalyzes the transfer of the diacylglyceryl group from phosphatidylglycerol to the sulfhydryl group of the N-terminal cysteine of a prolipoprotein, the first step in the formation of mature lipoproteins. The chain is Phosphatidylglycerol--prolipoprotein diacylglyceryl transferase from Aliivibrio fischeri (strain MJ11) (Vibrio fischeri).